The primary structure comprises 439 residues: MNLTPKEIVKFLDDYVIGQKKAKKIIAIALRNRYRRMQLSPELQDDIVPKNILMIGSTGVGKTEIARRLAKMMGFPFIKIEASKYTEVGFVGRDVESMVRDLANAALNLVKNEQREKNKDKIDEFIENKILEKLLPPLPKGISDEKQEEYKNSLEKMRTKLRNGNLDESTIEIEISQNMFDTNPNLPPEMGAMQDIVKVIGVGSKKVKKEMKIKDAKNALKNEAGEKILDQESIKSEALKRAENEGIIFIDEIDKIAVSSGNSNRQDPSKEGVQRDLLPIVEGSNVQTKIGTLKTDHILFIAAGAFHLSKPSDLIPELQGRFPLRVELDSLDDKALYEILTRPKNSLLKQYSQLLKTENLELEFDDEAIKEIAKIASRANEEMQDIGARRLHTVIEKLLEDLSFEADEYAGKKFVVDKKMVEEKLGDIIENKDLARYIL.

ATP is bound by residues Ile17, 59-64 (GVGKTE), Asp251, Glu317, and Arg389.

This sequence belongs to the ClpX chaperone family. HslU subfamily. A double ring-shaped homohexamer of HslV is capped on each side by a ring-shaped HslU homohexamer. The assembly of the HslU/HslV complex is dependent on binding of ATP.

It localises to the cytoplasm. In terms of biological role, ATPase subunit of a proteasome-like degradation complex; this subunit has chaperone activity. The binding of ATP and its subsequent hydrolysis by HslU are essential for unfolding of protein substrates subsequently hydrolyzed by HslV. HslU recognizes the N-terminal part of its protein substrates and unfolds these before they are guided to HslV for hydrolysis. The chain is ATP-dependent protease ATPase subunit HslU from Campylobacter jejuni subsp. jejuni serotype O:23/36 (strain 81-176).